The following is a 248-amino-acid chain: PF03932 family protein CutC (248 aa).

The protein belongs to the CutC family.

It is found in the cytoplasm. This is PF03932 family protein CutC from Photorhabdus laumondii subsp. laumondii (strain DSM 15139 / CIP 105565 / TT01) (Photorhabdus luminescens subsp. laumondii).